Reading from the N-terminus, the 285-residue chain is Zinc transporter ZupT (285 aa).

Helical transmembrane passes span 13-33, 41-61, and 80-100; these read AFLLTLLAGLATGIGSCIAFF, FLCVSLGFSAGVMIYVSMIEM, and WITVISFFAGIAIIALIDKFV. Fe(2+) contacts are provided by N153 and E156. E156 lines the Zn(2+) pocket. The chain crosses the membrane as a helical span at residues 160–180; sequence TFVSALEGASLAIPITIAIAI. H181 is a binding site for Zn(2+). The Fe(2+) site is built by N182, E185, and E214. Residue E185 participates in Zn(2+) binding. The next 3 helical transmembrane spans lie at 204–224, 228–248, and 265–285; these read FLYSFLSGMSEPIGAIIGYTL, IFNDITLGILLSAVAGIMVFI, and LAIYGLIAGMVVMAVSLLLFI.

This sequence belongs to the ZIP transporter (TC 2.A.5) family. ZupT subfamily.

The protein resides in the cell membrane. The enzyme catalyses Zn(2+)(in) = Zn(2+)(out). Its function is as follows. Mediates zinc uptake. May also transport other divalent cations. The polypeptide is Zinc transporter ZupT (Clostridium perfringens (strain 13 / Type A)).